The sequence spans 127 residues: Major sperm protein isoform alpha (127 aa).

The residue at position 2 (A2) is an N-acetylalanine. Residues 9 to 126 (DINTQPSQKI…RRKNLPIEYN (118 aa)) enclose the MSP domain.

Forms filaments 10 nm wide, with a characteristic substructure repeating axially at 9 nm. As to expression, sperm.

It is found in the cell projection. It localises to the pseudopodium. The protein resides in the cytoplasm. The protein localises to the cytoskeleton. Central component in molecular interactions underlying sperm crawling. Forms an extensive filament system that extends from sperm villipoda, along the leading edge of the pseudopod. The sequence is that of Major sperm protein isoform alpha from Ascaris suum (Pig roundworm).